The primary structure comprises 142 residues: Small heat shock protein IbpB (142 aa).

Residues 26 to 137 enclose the sHSP domain; sequence AGESQSFPPY…AAQRIAISER (112 aa).

Belongs to the small heat shock protein (HSP20) family. As to quaternary structure, homodimer. Forms homomultimers of about 100-150 subunits at optimal growth temperatures. Conformation changes to oligomers at high temperatures or high ionic concentrations. The decrease in size of the multimers is accompanied by an increase in chaperone activity.

The protein localises to the cytoplasm. Functionally, associates with aggregated proteins, together with IbpA, to stabilize and protect them from irreversible denaturation and extensive proteolysis during heat shock and oxidative stress. Aggregated proteins bound to the IbpAB complex are more efficiently refolded and reactivated by the ATP-dependent chaperone systems ClpB and DnaK/DnaJ/GrpE. Its activity is ATP-independent. This chain is Small heat shock protein IbpB, found in Shigella flexneri serotype 5b (strain 8401).